Consider the following 349-residue polypeptide: Peroxidase 7 (349 aa).

The first 22 residues, 1-22, serve as a signal peptide directing secretion; it reads MKLAVVSVVVILGVLVAWPVSA. 4 disulfides stabilise this stretch: cysteine 60–cysteine 136, cysteine 93–cysteine 98, cysteine 142–cysteine 341, and cysteine 220–cysteine 252. Residue histidine 91 is the Proton acceptor of the active site. Ca(2+) contacts are provided by aspartate 92, valine 95, glycine 97, aspartate 99, and serine 101. Proline 183 provides a ligand contact to substrate. Histidine 213 serves as a coordination point for heme b. Residue threonine 214 coordinates Ca(2+). N-linked (GlcNAc...) asparagine glycosylation is present at asparagine 231. Ca(2+) is bound by residues aspartate 262, threonine 265, and aspartate 270.

The protein belongs to the peroxidase family. Classical plant (class III) peroxidase subfamily. Heme b serves as cofactor. Ca(2+) is required as a cofactor.

The protein resides in the secreted. It catalyses the reaction 2 a phenolic donor + H2O2 = 2 a phenolic radical donor + 2 H2O. Functionally, removal of H(2)O(2), oxidation of toxic reductants, biosynthesis and degradation of lignin, suberization, auxin catabolism, response to environmental stresses such as wounding, pathogen attack and oxidative stress. These functions might be dependent on each isozyme/isoform in each plant tissue. This Arabidopsis thaliana (Mouse-ear cress) protein is Peroxidase 7 (PER7).